We begin with the raw amino-acid sequence, 299 residues long: Acetylglutamate kinase (299 aa).

Residues 64–65, Arg-86, and Asn-197 contribute to the substrate site; that span reads GG.

It belongs to the acetylglutamate kinase family. ArgB subfamily.

The protein resides in the cytoplasm. It carries out the reaction N-acetyl-L-glutamate + ATP = N-acetyl-L-glutamyl 5-phosphate + ADP. It participates in amino-acid biosynthesis; L-arginine biosynthesis; N(2)-acetyl-L-ornithine from L-glutamate: step 2/4. In terms of biological role, catalyzes the ATP-dependent phosphorylation of N-acetyl-L-glutamate. This is Acetylglutamate kinase from Sulfurihydrogenibium sp. (strain YO3AOP1).